Here is a 150-residue protein sequence, read N- to C-terminus: Small ribosomal subunit protein uS11y (150 aa).

Positions 129–150 (EDVTPVPTDSTRRKGGRRGRRL) are disordered. Basic residues predominate over residues 141 to 150 (RKGGRRGRRL).

The protein belongs to the universal ribosomal protein uS11 family.

The chain is Small ribosomal subunit protein uS11y from Zea mays (Maize).